We begin with the raw amino-acid sequence, 280 residues long: uncharacterized protein (280 aa).

4 CBS domains span residues Gln10–Tyr67, Met90–Glu146, Ile154–Phe209, and Met229–Ala280.

This is an uncharacterized protein from Methanocaldococcus jannaschii (strain ATCC 43067 / DSM 2661 / JAL-1 / JCM 10045 / NBRC 100440) (Methanococcus jannaschii).